We begin with the raw amino-acid sequence, 1383 residues long: DNA-directed RNA polymerase subunit beta'' (1383 aa).

Zn(2+) contacts are provided by C220, C289, C296, and C299.

Belongs to the RNA polymerase beta' chain family. RpoC2 subfamily. As to quaternary structure, in plastids the minimal PEP RNA polymerase catalytic core is composed of four subunits: alpha, beta, beta', and beta''. When a (nuclear-encoded) sigma factor is associated with the core the holoenzyme is formed, which can initiate transcription. The cofactor is Zn(2+).

It is found in the plastid. It localises to the chloroplast. The catalysed reaction is RNA(n) + a ribonucleoside 5'-triphosphate = RNA(n+1) + diphosphate. DNA-dependent RNA polymerase catalyzes the transcription of DNA into RNA using the four ribonucleoside triphosphates as substrates. This Oenothera parviflora (Small-flowered evening primrose) protein is DNA-directed RNA polymerase subunit beta''.